Consider the following 550-residue polypeptide: 2-succinyl-5-enolpyruvyl-6-hydroxy-3-cyclohexene-1-carboxylate synthase (550 aa).

The protein belongs to the TPP enzyme family. MenD subfamily. In terms of assembly, homodimer. It depends on Mg(2+) as a cofactor. Mn(2+) is required as a cofactor. Requires thiamine diphosphate as cofactor.

The enzyme catalyses isochorismate + 2-oxoglutarate + H(+) = 5-enolpyruvoyl-6-hydroxy-2-succinyl-cyclohex-3-ene-1-carboxylate + CO2. It functions in the pathway quinol/quinone metabolism; 1,4-dihydroxy-2-naphthoate biosynthesis; 1,4-dihydroxy-2-naphthoate from chorismate: step 2/7. It participates in quinol/quinone metabolism; menaquinone biosynthesis. Functionally, catalyzes the thiamine diphosphate-dependent decarboxylation of 2-oxoglutarate and the subsequent addition of the resulting succinic semialdehyde-thiamine pyrophosphate anion to isochorismate to yield 2-succinyl-5-enolpyruvyl-6-hydroxy-3-cyclohexene-1-carboxylate (SEPHCHC). The sequence is that of 2-succinyl-5-enolpyruvyl-6-hydroxy-3-cyclohexene-1-carboxylate synthase from Flavobacterium psychrophilum (strain ATCC 49511 / DSM 21280 / CIP 103535 / JIP02/86).